A 494-amino-acid chain; its full sequence is Ribonuclease H (494 aa).

Disordered regions lie at residues 79 to 148 (NRRR…APPP) and 205 to 231 (RSGLEKSDRGDGAASLSALSEPQVGLR). Composition is skewed to polar residues over residues 84–100 (GSTSKKAQVKSSVNQLA) and 131–143 (PTTSRASGETRTS). One can recognise an RNase H type-1 domain in the interval 272–488 (SSVPQVVYVD…ADVLAVAGAR (217 aa)). Residues Asp-281, Glu-325, Asp-374, and Asp-480 each contribute to the Mg(2+) site.

This sequence belongs to the RNase H family. In terms of assembly, monomer. The cofactor is Mg(2+).

The catalysed reaction is Endonucleolytic cleavage to 5'-phosphomonoester.. Its function is as follows. Endonuclease that specifically degrades the RNA of RNA-DNA hybrids. This Crithidia fasciculata protein is Ribonuclease H (RNH1).